A 179-amino-acid chain; its full sequence is Photosystem I assembly protein Ycf3 (179 aa).

TPR repeat units follow at residues 29-62 (AFSY…EEDP), 66-99 (SYTL…NSNL), and 126-159 (NLEI…APDN).

It belongs to the Ycf3 family.

It localises to the plastid. The protein resides in the chloroplast thylakoid membrane. In terms of biological role, essential for the assembly of the photosystem I (PSI) complex. May act as a chaperone-like factor to guide the assembly of the PSI subunits. This chain is Photosystem I assembly protein Ycf3, found in Trieres chinensis (Marine centric diatom).